A 317-amino-acid polypeptide reads, in one-letter code: Retinol dehydrogenase 7 (317 aa).

Position 33 to 57 (33 to 57) interacts with NADP(+); that stretch reads FITGCDSGFGNLLARQLDRRGMRVL. Serine 164 is a substrate binding site. Residue tyrosine 176 is the Proton acceptor of the active site.

It belongs to the short-chain dehydrogenases/reductases (SDR) family.

The protein localises to the microsome. It is found in the endoplasmic reticulum. The enzyme catalyses all-trans-retinol--[retinol-binding protein] + NAD(+) = all-trans-retinal--[retinol-binding protein] + NADH + H(+). It participates in cofactor metabolism; retinol metabolism. Functionally, acts on retinol bound on cellular retinol-binding protein (CRBP). This chain is Retinol dehydrogenase 7, found in Rattus norvegicus (Rat).